We begin with the raw amino-acid sequence, 421 residues long: Granaticin polyketide putative beta-ketoacyl synthase 1 (421 aa).

The 415-residue stretch at 2-416 (TRRVVITGVG…GFQSAMVLHR (415 aa)) folds into the Ketosynthase family 3 (KS3) domain. Active-site for beta-ketoacyl synthase activity residues include cysteine 169, histidine 309, and histidine 346.

This sequence belongs to the thiolase-like superfamily. Beta-ketoacyl-ACP synthases family.

The protein operates within antibiotic biosynthesis; granaticin biosynthesis. The polypeptide is Granaticin polyketide putative beta-ketoacyl synthase 1 (gra-orf1) (Streptomyces violaceoruber).